Reading from the N-terminus, the 600-residue chain is ATP-dependent RNA helicase DDX55 (600 aa).

Positions 9 to 37 match the Q motif motif; sequence WESLQVPLHPRVLGALRELGFPHMTPVQS. A Helicase ATP-binding domain is found at 40–223; sequence IPLFMKNKDV…RAGLRNPVRI (184 aa). An ATP-binding site is contributed by 53–60; that stretch reads AVTGSGKT. Residues 171–174 carry the DEAD box motif; the sequence is DEAD. The region spanning 254-402 is the Helicase C-terminal domain; the sequence is KFNQLVHFLR…EMSLQRNTID (149 aa). A compositionally biased stretch (basic and acidic residues) spans 499-513; sequence LEQKRKERSENEGRK. The segment at 499-551 is disordered; that stretch reads LEQKRKERSENEGRKKFIKNKAWSKQKAKKERKKKMNAKRKKDEGSDIDDEDM. The span at 514-538 shows a compositional bias: basic residues; it reads KFIKNKAWSKQKAKKERKKKMNAKR. Positions 533–562 are important for nuclear localization; sequence KMNAKRKKDEGSDIDDEDMEELLNDTRLLK. Residues S544 and S594 each carry the phosphoserine modification.

This sequence belongs to the DEAD box helicase family. DDX55/SPB4 subfamily. In terms of assembly, interacts with 28S rRNA. Interacts with double-stranded RNA substrates in vitro; the interaction stimulates ATPase activity.

It localises to the nucleus. The protein localises to the nucleoplasm. It catalyses the reaction ATP + H2O = ADP + phosphate + H(+). Functionally, probable ATP-binding RNA helicase. Has ATPase activity and is involved in the maturation of precursor large subunit rRNAs. The chain is ATP-dependent RNA helicase DDX55 (Ddx55) from Mus musculus (Mouse).